The sequence spans 150 residues: Transcriptional repressor NrdR (150 aa).

The disordered stretch occupies residues 1–26; that stretch reads MKCPFCGNSDSKVVDSRPDKGGSGIR. The segment at 3 to 34 is a zinc-finger region; that stretch reads CPFCGNSDSKVVDSRPDKGGSGIRRRRECEQC. Residues 49 to 139 form the ATP-cone domain; sequence PLVLKKDGRR…VYRSFRDINE (91 aa).

It belongs to the NrdR family. Requires Zn(2+) as cofactor.

Functionally, negatively regulates transcription of bacterial ribonucleotide reductase nrd genes and operons by binding to NrdR-boxes. The sequence is that of Transcriptional repressor NrdR from Pelobacter propionicus (strain DSM 2379 / NBRC 103807 / OttBd1).